The primary structure comprises 129 residues: Protein NrdI (129 aa).

The protein belongs to the NrdI family.

Its function is as follows. Probably involved in ribonucleotide reductase function. This chain is Protein NrdI, found in Macrococcus caseolyticus (strain JCSC5402) (Macrococcoides caseolyticum).